The primary structure comprises 287 residues: Energy-coupling factor transporter ATP-binding protein EcfA (287 aa).

The 234-residue stretch at 19-252 folds into the ABC transporter domain; it reads FEIQNVSFSY…EEFLASSALD (234 aa). 52–59 is an ATP binding site; it reads GHNGSGKS.

Belongs to the ABC transporter superfamily. Energy-coupling factor EcfA family. In terms of assembly, forms a stable energy-coupling factor (ECF) transporter complex composed of 2 membrane-embedded substrate-binding proteins (S component), 2 ATP-binding proteins (A component) and 2 transmembrane proteins (T component).

Its subcellular location is the cell membrane. ATP-binding (A) component of a common energy-coupling factor (ECF) ABC-transporter complex. Unlike classic ABC transporters this ECF transporter provides the energy necessary to transport a number of different substrates. This is Energy-coupling factor transporter ATP-binding protein EcfA from Malacoplasma penetrans (strain HF-2) (Mycoplasma penetrans).